Here is a 338-residue protein sequence, read N- to C-terminus: Isopentenyl-diphosphate delta-isomerase (338 aa).

13 to 14 (RK) serves as a coordination point for substrate. FMN is bound by residues 72-74 (AMT), serine 102, and asparagine 130. 102 to 104 (SQR) provides a ligand contact to substrate. Residue glutamine 165 participates in substrate binding. A Mg(2+)-binding site is contributed by glutamate 166. FMN is bound by residues lysine 197, threonine 227, 274-276 (GIR), and 295-296 (AR).

The protein belongs to the IPP isomerase type 2 family. In terms of assembly, homooctamer. Dimer of tetramers. It depends on FMN as a cofactor. Requires NADPH as cofactor. Mg(2+) serves as cofactor.

It is found in the cytoplasm. It carries out the reaction isopentenyl diphosphate = dimethylallyl diphosphate. In terms of biological role, involved in the biosynthesis of isoprenoids. Catalyzes the 1,3-allylic rearrangement of the homoallylic substrate isopentenyl (IPP) to its allylic isomer, dimethylallyl diphosphate (DMAPP). This chain is Isopentenyl-diphosphate delta-isomerase, found in Deinococcus radiodurans (strain ATCC 13939 / DSM 20539 / JCM 16871 / CCUG 27074 / LMG 4051 / NBRC 15346 / NCIMB 9279 / VKM B-1422 / R1).